Consider the following 452-residue polypeptide: Mitochondrial import inner membrane translocase subunit TIM50 (452 aa).

Residues 1–23 (MSLSKLTQTCFSRHQAKTFIRLY) constitute a mitochondrion transit peptide. Topologically, residues 24–167 (SSDFKSLLGP…RRKRMERNTR (144 aa)) are mitochondrial matrix. Disordered stretches follow at residues 96–115 (IEAEKVLSSPPPAPAPTSSA) and 130–153 (ESAASKSSSSSGGSSDNSDPGNAE). Over residues 131 to 144 (SAASKSSSSSGGSS) the composition is skewed to low complexity. A helical transmembrane segment spans residues 168–188 (IGAYVLFGGSIIGFISFCFYY). The Mitochondrial intermembrane portion of the chain corresponds to 189-452 (GRAQRDEFGN…LFGSRRHVNA (264 aa)). Residues 243–387 (YLQPKYTIVI…VDLAELLKTI (145 aa)) enclose the FCP1 homology domain.

It belongs to the TIM50 family.

It is found in the mitochondrion inner membrane. In terms of biological role, essential component of the TIM23 complex, a complex that mediates the translocation of transit peptide-containing proteins across the mitochondrial inner membrane. In Caenorhabditis elegans, this protein is Mitochondrial import inner membrane translocase subunit TIM50 (scpl-4).